We begin with the raw amino-acid sequence, 241 residues long: DNA repair protein RecO (241 aa).

It belongs to the RecO family.

Involved in DNA repair and RecF pathway recombination. In Yersinia pseudotuberculosis serotype O:1b (strain IP 31758), this protein is DNA repair protein RecO.